The following is a 35-amino-acid chain: Z-limacoditoxin(1)-Dv4 (35 aa).

Positions 1–22 (MKKTFLPIFLVILLASYALGNP) are cleaved as a signal peptide. Gln-23 carries the post-translational modification Pyrrolidone carboxylic acid. Pro-32 bears the Proline amide mark.

This sequence belongs to the limacoditoxin-1 (ACP-like) family. In terms of tissue distribution, expressed by the venom secretory cell of the spine. The spine is a cuticular structure containing a single large nucleated venom-secreting cell at its base. It is an independent unit capable of producing, storing and injecting venom. On the back of D.vulnerans caterpillars, spines are grouped together by 50 to 100 to form scoli, of which there are eight in D.vulnerans.

It localises to the secreted. Functionally, potently activates insect GPCR. More precisely, it activates the ACP receptor (ACPR) from the mosquito A.aegypti (EC(50)=3.07 nM) with a potency comparable to that of the endogenous ligand. Has no activity on receptors of the closely related neuropeptides adipokinetic hormone and corazonin. In vivo, does not reveal any observable effects when injected into crickets (A.domesticus). Does not induce increase in intracellular calcium in mouse DRG neurons, suggesting that it does not induce pain. This Doratifera vulnerans (Mottled cup moth) protein is Z-limacoditoxin(1)-Dv4.